The primary structure comprises 238 residues: Large ribosomal subunit protein uL1 (238 aa).

The protein belongs to the universal ribosomal protein uL1 family. In terms of assembly, part of the 50S ribosomal subunit.

In terms of biological role, binds directly to 23S rRNA. The L1 stalk is quite mobile in the ribosome, and is involved in E site tRNA release. Its function is as follows. Protein L1 is also a translational repressor protein, it controls the translation of the L11 operon by binding to its mRNA. This chain is Large ribosomal subunit protein uL1, found in Nostoc sp. (strain PCC 7120 / SAG 25.82 / UTEX 2576).